The primary structure comprises 364 residues: MSSFPTVLVIGAGLAGSEAAWQIAQAGVPVRLIEMRPIKHSPAHYSSECAELVCSNSFGALSSDRAAGLLKEELRRLGSIVIRTADSHAVPAGGALAVNRASFSASLTKELSAHPHITIERQEQEHLPDEGQITVLATGPLTSELLAENLRTFTGRSECHFFDAASPIIEGESIDLTLAFRASRYDKGDADYMNCPMDKGQYLAFREALLNAEQAELKEFDKESAKFFEGCLPIEELARRGEDTMRYGPLKPIGLWDPRWGDLNDRDVRRSKRAYAVVQLRKEDLEGRLWNLVGFQTNLKWSEQKRVLKMIPGLHQAEFVRFGVMHRNTFSKPRSYLNQPCSSANDPTSSLLDRSPAQRDIPLQ.

11–16 contacts FAD; it reads GAGLAG. The span at 335 to 352 shows a compositional bias: polar residues; that stretch reads SYLNQPCSSANDPTSSLL. The segment at 335 to 364 is disordered; it reads SYLNQPCSSANDPTSSLLDRSPAQRDIPLQ.

Belongs to the MnmG family. TrmFO subfamily. FAD is required as a cofactor.

The protein localises to the cytoplasm. It carries out the reaction uridine(54) in tRNA + (6R)-5,10-methylene-5,6,7,8-tetrahydrofolate + NADH + H(+) = 5-methyluridine(54) in tRNA + (6S)-5,6,7,8-tetrahydrofolate + NAD(+). It catalyses the reaction uridine(54) in tRNA + (6R)-5,10-methylene-5,6,7,8-tetrahydrofolate + NADPH + H(+) = 5-methyluridine(54) in tRNA + (6S)-5,6,7,8-tetrahydrofolate + NADP(+). In terms of biological role, catalyzes the folate-dependent formation of 5-methyl-uridine at position 54 (M-5-U54) in all tRNAs. This chain is Methylenetetrahydrofolate--tRNA-(uracil-5-)-methyltransferase TrmFO, found in Prochlorococcus marinus (strain MIT 9313).